The primary structure comprises 52 residues: Large ribosomal subunit protein bL32c (52 aa).

This sequence belongs to the bacterial ribosomal protein bL32 family.

Its subcellular location is the plastid. The protein resides in the chloroplast. The chain is Large ribosomal subunit protein bL32c from Morus indica (Mulberry).